The following is a 61-amino-acid chain: UPF0434 protein Sama_1339 (61 aa).

Belongs to the UPF0434 family.

This chain is UPF0434 protein Sama_1339, found in Shewanella amazonensis (strain ATCC BAA-1098 / SB2B).